A 782-amino-acid polypeptide reads, in one-letter code: Polyribonucleotide nucleotidyltransferase (782 aa).

Positions 514 and 520 each coordinate Mg(2+). Positions proline 580–isoleucine 639 constitute a KH domain. Residues glycine 651–valine 723 enclose the S1 motif domain. Positions alanine 734–glutamine 753 are enriched in low complexity. The interval alanine 734–histidine 782 is disordered. A compositionally biased stretch (basic and acidic residues) spans arginine 766–glutamine 776.

This sequence belongs to the polyribonucleotide nucleotidyltransferase family. It depends on Mg(2+) as a cofactor.

It localises to the cytoplasm. It catalyses the reaction RNA(n+1) + phosphate = RNA(n) + a ribonucleoside 5'-diphosphate. In terms of biological role, involved in mRNA degradation. Catalyzes the phosphorolysis of single-stranded polyribonucleotides processively in the 3'- to 5'-direction. This chain is Polyribonucleotide nucleotidyltransferase, found in Acidothermus cellulolyticus (strain ATCC 43068 / DSM 8971 / 11B).